The sequence spans 185 residues: Peptidyl-tRNA hydrolase (185 aa).

Tyr-14 is a tRNA binding site. The Proton acceptor role is filled by His-19. 3 residues coordinate tRNA: Tyr-65, Asn-67, and Asn-113.

This sequence belongs to the PTH family. In terms of assembly, monomer.

The protein resides in the cytoplasm. It catalyses the reaction an N-acyl-L-alpha-aminoacyl-tRNA + H2O = an N-acyl-L-amino acid + a tRNA + H(+). Hydrolyzes ribosome-free peptidyl-tRNAs (with 1 or more amino acids incorporated), which drop off the ribosome during protein synthesis, or as a result of ribosome stalling. Its function is as follows. Catalyzes the release of premature peptidyl moieties from peptidyl-tRNA molecules trapped in stalled 50S ribosomal subunits, and thus maintains levels of free tRNAs and 50S ribosomes. This Rickettsia conorii (strain ATCC VR-613 / Malish 7) protein is Peptidyl-tRNA hydrolase.